The chain runs to 1218 residues: NACHT, LRR and PYD domains-containing protein 1a allele 3 (1218 aa).

The span at 1–29 shows a compositional bias: polar residues; it reads MGESQSKQESNTRVAQHGSQQDVDPTFQT. 2 disordered regions span residues 1–44 and 71–91; these read MGES…QVEQ and EMDH…DRSE. Basic residues predominate over residues 77–87; sequence RRHSHQSKKKL. The 310-residue stretch at 175 to 484 folds into the NACHT domain; sequence QLVIIEGAAG…EFFAAMSYIL (310 aa). 181 to 188 contributes to the ATP binding site; it reads GAAGIGKS. 3 LRR repeats span residues 343–364, 673–693, and 730–750; these read KERN…LTLC, NLEE…RSLC, and RLAE…RQLC. Positions 799–815 are enriched in polar residues; sequence TMPTENTDGEESLTSSK. Residues 799-842 form a disordered region; the sequence is TMPTENTDGEESLTSSKQQQQQSGDKHMEPLGTDDDFWGPSGPV. The tract at residues 835 to 968 is ZU5; that stretch reads FWGPSGPVST…HFAVLENPSF (134 aa). Positions 835-1118 constitute an FIIND domain; it reads FWGPSGPVST…LRPALPRMAS (284 aa). Residues 969 to 1118 form a UPA region; that stretch reads SPMGVLLRMI…LRPALPRMAS (150 aa). Residues 1122–1211 enclose the CARD domain; that stretch reads DAPALLHFVD…HLIMDLLEKS (90 aa).

It belongs to the NLRP family. As to quaternary structure, interacts (via LRR repeats) with BCL2 and BCL2L1 (via the loop between motifs BH4 and BH3). Interacts with NOD2; this interaction is enhanced in the presence of muramyl dipeptide (MDP) and increases IL1B release. Interacts with EIF2AK2/PKR; this interaction requires EIF2AK2 activity, is accompanied by EIF2AK2 autophosphorylation and promotes inflammasome assembly in response to danger-associated signals. Interacts with MEFV; this interaction targets Nlrp1a to degradation by autophagy, hence preventing excessive IL1B- and IL18-mediated inflammation. Interacts with DPP9; leading to inhibit activation of the inflammasome. DPP9 acts via formation of a ternary complex, composed of a DPP9 homodimer, one full-length NLRP1 protein, and one cleaved C-terminus of Nlrp1a (NACHT, LRR and PYD domains-containing protein 1a, C-terminus). Interacts with DPP8; leading to inhibit activation of the inflammasome, probably via formation of a ternary complex with DPP8. Interacts with the C-terminal part of Nlrp1a (NACHT, LRR and PYD domains-containing protein 1a, C-terminus) in absence of pathogens and other damage-associated signals. In terms of assembly, interacts with the N-terminal part of Nlrp1a (NACHT, LRR and PYD domains-containing protein 1a, N-terminus) in absence of pathogens and other damage-associated signals. Homomultimer; forms the Nlrp1a inflammasome polymeric complex, a filament composed of homopolymers of this form in response to pathogens and other damage-associated signals. The Nlrp1a inflammasome polymeric complex directly recruits pro-caspase-1 (proCASP1) independently of PYCARD/ASC. Interacts (via CARD domain) with CASP1 (via CARD domain); leading to CASP1 activation. Autocatalytically cleaved. Autocatalytic cleavage in FIIND region occurs constitutively, prior to activation signals, and is required for inflammasome activity (IL1B release), possibly by facilitating CASP1 binding. Both N- and C-terminal parts remain associated non-covalently. In terms of processing, ubiquitinated in response to pathogen-associated signals, leading to its degradation by the proteasome and subsequent release of the cleaved C-terminal part of the protein (NACHT, LRR and PYD domains-containing protein 1a, C-terminus), which polymerizes and forms the Nlrp1a inflammasome.

The protein localises to the cytoplasm. The protein resides in the cytosol. It is found in the nucleus. It localises to the inflammasome. Its activity is regulated as follows. Activated by pathogens and other damage-associated signals: activation promotes ubiquitination and degradation of the N-terminal part, releasing the cleaved C-terminal part of the protein (NACHT, LRR and PYD domains-containing protein 1a, C-terminus), which polymerizes and forms the Nlrp1a inflammasome. Nlrp1a inflammasome is inhibited by DPP8 and DPP9, which sequester the C-terminal fragment of Nlrp1a (NACHT, LRR and PYD domains-containing protein 1a, C-terminus) in a ternary complex, thereby preventing Nlrp1a oligomerization and activation. Nlrp1a inflammasome is strongly activated by Val-boroPro (Talabostat, PT-100), an inhibitor of dipeptidyl peptidases DPP8 and DPP9. Val-boroPro relieves inhibition of DPP8 and/or DPP9 by promoting disruption of the ternary complex, releasing its C-terminal part from autoinhibition. Not activated by cleavage by B.anthracis lethal toxin (LT) endopeptidase. In terms of biological role, acts as the sensor component of the Nlrp1a inflammasome, which mediates inflammasome activation in response to various pathogen-associated signals, leading to subsequent pyroptosis. Inflammasomes are supramolecular complexes that assemble in the cytosol in response to pathogens and other damage-associated signals and play critical roles in innate immunity and inflammation. Acts as a recognition receptor (PRR): recognizes specific pathogens and other damage-associated signals, such as Val-boroPro inhibitor, and mediates the formation of the inflammasome polymeric complex. In response to pathogen-associated signals, the N-terminal part of Nlrp1a is degraded by the proteasome, releasing the cleaved C-terminal part of the protein (NACHT, LRR and PYD domains-containing protein 1a, C-terminus), which polymerizes to initiate the formation of the inflammasome complex: the inflammasome directly recruits pro-caspase-1 (proCASP1) independently of PYCARD/ASC and promotes caspase-1 (CASP1) activation, which subsequently cleaves and activates inflammatory cytokines IL1B and IL18 and gasdermin-D (GSDMD), leading to pyroptosis. In the absence of GSDMD expression, the Nlrp1a inflammasome is able to recruit and activate CASP8, leading to activation of gasdermin-E (GSDME). Functionally, constitutes the precursor of the Nlrp1a inflammasome, which mediates autoproteolytic processing within the FIIND domain to generate the N-terminal and C-terminal parts, which are associated non-covalently in absence of pathogens and other damage-associated signals. Regulatory part that prevents formation of the Nlrp1a inflammasome: in absence of pathogens and other damage-associated signals, interacts with the C-terminal part of Nlrp1a (NACHT, LRR and PYD domains-containing protein 1a, C-terminus), preventing activation of the Nlrp1a inflammasome. In response to pathogen-associated signals, this part is ubiquitinated by the N-end rule pathway and degraded by the proteasome, releasing the cleaved C-terminal part of the protein, which polymerizes and forms the Nlrp1a inflammasome. Its function is as follows. Constitutes the active part of the Nlrp1a inflammasome. In absence of pathogens and other damage-associated signals, interacts with the N-terminal part of Nlrp1a (NACHT, LRR and PYD domains-containing protein 1a, N-terminus), preventing activation of the Nlrp1a inflammasome. In response to pathogen-associated signals, the N-terminal part of Nlrp1a is degraded by the proteasome, releasing this form, which polymerizes to form the Nlrp1a inflammasome complex: the Nlrp1a inflammasome complex then directly recruits pro-caspase-1 (proCASP1) and promotes caspase-1 (CASP1) activation, leading to gasdermin-D (GSDMD) cleavage and subsequent pyroptosis. The chain is NACHT, LRR and PYD domains-containing protein 1a allele 3 from Rattus norvegicus (Rat).